The sequence spans 206 residues: Musculin (206 aa).

The tract at residues 1 to 115 (MSTGSVSDPE…QSQRNAANAR (115 aa)) is disordered. Over residues 46-56 (SAEEEDPDGEE) the composition is skewed to acidic residues. The Nuclear localization signal signature appears at 71–76 (KRKRPR). Over residues 78–92 (AGGGGAGGSAGGGGK) the composition is skewed to gly residues. The segment covering 93–102 (KPLPAKGSAA) has biased composition (low complexity). In terms of domain architecture, bHLH spans 107–159 (SQRNAANARERARMRVLSKAFSRLKTSLPWVPPDTKLSKLDTLRLASSYIAHL).

Efficient DNA binding requires dimerization with another bHLH protein. Binds DNA as a homodimer or a heterodimer. Forms a heterodimer with TCF3. As to expression, expressed in lymphoid tissues, B-cell lines and activated B-cells.

It localises to the nucleus. Its function is as follows. Transcription repressor capable of inhibiting the transactivation capability of TCF3/E47. May play a role in regulating antigen-dependent B-cell differentiation. The polypeptide is Musculin (MSC) (Homo sapiens (Human)).